We begin with the raw amino-acid sequence, 545 residues long: MTVNNILWFRHGLRLHDNPSLLEALRNDGTGSESVRLYPIFIFDGESAGTKLVGFNRMKFLLESLADLDRQLREIGGQLYVFKGNAVNVMRRLFEELNIRKLCFEQDCEPIWKARDDAIQNLCRMMDVKCVEKVSHTLWDPQQIIRTNGGIPPLTYQMFLHTVDIIGKPPRPVAAPSFEFVEFGSIPSILAQEVKLQQVRNLSPEDFGIYYEGNPDISHQQWMGGETKALECLGHRLKQEEEAFLGGYFLPTQAKPEFLVPPTSMSAALRFGCLSVRMFYWCVHDLYEKVQANNQYRNPGGQHITGQLIWREYFYTMSVHNPHYAEMEANPICLNIPWYEPKDDSLDRWKEGRTGFPMIDAAMRQLLAEGWLHHILRNITATFLTRGALWISWEAGVQHFLKYLLDADWSVCAGNWMWVSSSAFEKLLDSSSCTSPIALARRLDPKGEYVRRYLPELKNLPTLYVHEPWKAPLDVQKECGCIVGRDYPAPMIDLAAASRANANTMNSIRQKLMERGGSTPPHCRPSDVEEIRNFFWLPEDVVADC.

The Photolyase/cryptochrome alpha/beta domain maps to 3–138; sequence VNNILWFRHG…KCVEKVSHTL (136 aa). FAD contacts are provided by residues Arg-236, Ser-264, Ser-266, Gln-307, His-374, 406–408, Cys-412, and Asn-415; that span reads DAD.

Belongs to the DNA photolyase class-1 family. Interacts with tim and per; promoted by light conditions. The cofactor is FAD.

Its subcellular location is the cytoplasm. It localises to the perinuclear region. The protein localises to the nucleus. In terms of biological role, blue light-dependent regulator that is the input of the circadian feedback loop. Has no photolyase activity for cyclobutane pyrimidine dimers or 6-4 photoproducts. Regulation of expression by light suggests a role in photoreception for locomotor activity rhythms. Functions, together with per, as a transcriptional repressor required for the oscillation of peripheral circadian clocks and for the correct specification of clock cells. Genes directly activated by the transcription factors Clock (Clk) and cycle (cyc) are repressed by cry. This chain is Cryptochrome-1, found in Aedes aegypti (Yellowfever mosquito).